A 173-amino-acid chain; its full sequence is Ribosome maturation factor RimM (173 aa).

A PRC barrel domain is found at 92–165; sequence EGEFYHADLI…RVVIEAPAEI (74 aa).

Belongs to the RimM family. As to quaternary structure, binds ribosomal protein uS19.

It is found in the cytoplasm. Its function is as follows. An accessory protein needed during the final step in the assembly of 30S ribosomal subunit, possibly for assembly of the head region. Essential for efficient processing of 16S rRNA. May be needed both before and after RbfA during the maturation of 16S rRNA. It has affinity for free ribosomal 30S subunits but not for 70S ribosomes. The protein is Ribosome maturation factor RimM of Nitrobacter winogradskyi (strain ATCC 25391 / DSM 10237 / CIP 104748 / NCIMB 11846 / Nb-255).